The sequence spans 361 residues: MSSRKIKEEMLEIIAPELYAPRHRRSVKAETKSRVKKEEIKSKRKWKRPQIDDLLTEDVEVVGATAPRRPYQWRGRKVKRVLRPGTVITFTPGVRSRERASKRSSDEIFADEDILEQYERGEGEFRYGKRSKAEAAVVLDTSNPTPSLHPVTPQMPIVHTSAAKRSAVPTVEVLAPKKRRFTESSDQLAVDMVTETSTVPPGTAVLLPARAVKQARRRFPVAVESKKPEHMVVEEVKVRDVKPVAPGIGVQTIDFKVPVDAPKPPVSITEQMDISSTPAKKVAYGPANKIIPVAWQHPSQMGFPKYVRPKRRRRVARRSKSTGRFVAAPRKRTPRRKIVLPAVRYHPSLDTVPRSQVAIWR.

Residues 311-321 (RRRRVARRSKS) are compositionally biased toward basic residues. A disordered region spans residues 311–331 (RRRRVARRSKSTGRFVAAPRK).

Belongs to the adenoviridae core-capsid bridging protein family. In terms of assembly, monomer. Homodimer. Exists in equilibrium between monomers and dimers in solution. Interacts with the histone-like nucleoprotein; this interactions bridge the virus core to the capsid. Interacts with core protein X; this interactions bridge the virus core to the capsid. Interacts with the endosome lysis protein VI; this interactions bridge the virus core to the capsid. Interacts with the peripentonal hexons. Interacts with host NPM1; this interaction might play a role in virus assembly.

It localises to the virion. The protein resides in the host nucleus. It is found in the host nucleolus. In terms of biological role, associates loosely with the viral DNA to form an outer shell around the nucleoprotein-DNA complex and links it with the capsid by binding the endosome lysis protein. Dissociates from the viral genome during entry. Might be involved in nuclear capsid assembly of the viral particles through its association with NPM1/nucleophosmin. The protein is Core-capsid bridging protein of Bovine adenovirus 2 (BAdV-2).